Reading from the N-terminus, the 951-residue chain is MRSLKLAEGCKGTQVYALNPSAPTPPPPPGNSSTGGGGGGGSGGGTGGVGDKLLQHLSDHLRVNSVRSKSSRTYPPPTQPNAVVSPEFLLPCGLPVTDLLEPQIDPCLKFVDLVEKMAQVYRRIENCSQFEKSGAYLEQCAIFRGISDPKLFRRSLRSSRQHAVDVHAKVVLASWLRFERREDELIGTTSMDCCGRNLECPKATLVSGYDPESVYDPCVCSGASRSEMMNEDECSTSQEVDYDMSFCIGDEEVRCVRYKIASLSRPFKAMLYGGFREMKRATINFTQNGISVEGMRAAEIFSRTNRLDNFPPNVVLELLKLANRFCCDELKSACDSHLAHLVNSLDEAMLLIEYGLEEAAYLLVAACLQVFLRELPSSMHNPNVIKIFCSAEGRERLASLGHASFTLYFFLSQIAMEDDMKSNTTVMLLERLVECAVDSWEKQLAYHQLGVVMLERKEYKDAQRWFNAAVEAGHLYSLVGVARTKFKRDHRYSAYKIINSLISDHKATGWMHQERSLYCSGKEKLLDLDTATEFDPTLTFPYKFRAVALVEENQFGAAIAELNKILGFKASPDCLEMRAWISIGMEDYEGALKDIRALLTLEPNFMMFNWKIHGDHMVELLRPLAQQWSQADCWMQLYDRWSSVDDIGSLAVVHHMLANDPGKSLLRFRQSLLLLRLNCQKAAMRSLRLARNHSKSEHERLVYEGWILYDTGHREEALAKAEESISIQRSFEAFFLKAYALADSTLDPDSSNYVIQLLQEALKCPSDGLRKGQALNNLGSVYVDCEKLDLAADCYTNALTIKHTRAHQGLARVYHLKNQRKAAYDEMTKLIEKAQNNASAYEKRSEYCDREMAQSDLCLATQLDPLRTYPYRYRAAVLMDDHKESEAIDELSRAISFKPDLQLLHLRAAFYDSMGEGASAIKDCEAALCIDPGHADTLELYHKAREPNDQK.

Residues Val-15–Lys-52 are disordered. The segment covering Ser-33–Gly-50 has biased composition (gly residues). Positions Tyr-242–Val-342 constitute a BTB domain. TPR repeat units lie at residues Gln-443 to Tyr-476, Thr-539 to Pro-572, Asp-573 to Phe-605, His-698 to Phe-731, Gly-772 to Arg-805, His-807 to Asn-837, Thr-868 to Leu-901, and Leu-903 to His-934. Residues His-815–Gln-854 are a coiled coil.

This sequence belongs to the ETO1 family. Interacts with the C-terminal domain of ACS4, ACS5 and ACS9. Interacts with CUL3A. Putative component of a ubiquitin ligase complex containing CUL3. Predominantly expressed in flowers.

It participates in protein modification; protein ubiquitination. Functionally, essential regulator of the ethylene pathway, which acts by regulating the stability of 1-aminocyclopropane-1-carboxylate synthase (ACS) enzymes. May act as a substrate-specific adapter that connects ACS enzymes, such as ACS5, to ubiquitin ligase complexes, leading to proteasomal degradation of ACS enzymes. This is Ethylene-overproduction protein 1 (ETO1) from Arabidopsis thaliana (Mouse-ear cress).